The primary structure comprises 348 residues: MRFEGSNSMTLLVDDLVSQAQERFAAASDAAALENAKARFLGKEGALTVLLKALGKLDPEQKREMGARINQAKQQIEALLNARRAALAQAELDARLASETIDVTLPGRGKAAGGIHPVIRTWERVEEIFRSIGFDVADGPEVENDWTNFTALNNPLDHPARSMQDTFYVDMHDADGLPLLLRTHTSPMQVRYARMHKPPIKVIAPGRTYRVDSDATHSPMFHQVEGLWIAEDISFADLKGVYTDFLRCFFESDDLVVRFRPSFFPFTEPSAEIDMMFTSGPNRGRWLEISGSGQVHPQVVRNFGLDPERYIGFAFGSGLERLTMLRYGVNDLRQFYEGDLRFLRQFNE.

Glu-268 lines the Mg(2+) pocket.

Belongs to the class-II aminoacyl-tRNA synthetase family. Phe-tRNA synthetase alpha subunit type 1 subfamily. In terms of assembly, tetramer of two alpha and two beta subunits. Mg(2+) is required as a cofactor.

The protein localises to the cytoplasm. It catalyses the reaction tRNA(Phe) + L-phenylalanine + ATP = L-phenylalanyl-tRNA(Phe) + AMP + diphosphate + H(+). In Bordetella bronchiseptica (strain ATCC BAA-588 / NCTC 13252 / RB50) (Alcaligenes bronchisepticus), this protein is Phenylalanine--tRNA ligase alpha subunit.